The following is a 142-amino-acid chain: Large-conductance mechanosensitive channel (142 aa).

3 consecutive transmembrane segments (helical) span residues 10–30, 40–60, and 86–106; these read FAVK…GAFG, LIMP…LFVV, and GNFI…FMMV.

Belongs to the MscL family. In terms of assembly, homopentamer.

The protein resides in the cell inner membrane. Functionally, channel that opens in response to stretch forces in the membrane lipid bilayer. May participate in the regulation of osmotic pressure changes within the cell. This chain is Large-conductance mechanosensitive channel, found in Delftia acidovorans (strain DSM 14801 / SPH-1).